The sequence spans 374 residues: Potassium channel subfamily K member 9 (374 aa).

At 1–8 (MKRQNVRT) the chain is on the cytoplasmic side. A helical transmembrane segment spans residues 9-29 (LSLIICTFTYLLVGAAVFDAL). Topologically, residues 30–88 (ESDYEMREEEKLKAEEIRLKGKYNISSEDYRQLELVIMQSEPHRAGVQWKFAGSFYFAI) are extracellular. N-linked (GlcNAc...) asparagine glycosylation occurs at Asn-53. The segment at residues 89-101 (TVITTIGYGHAAP) is an intramembrane region (pore-forming). The Extracellular segment spans residues 102-107 (GTDAGK). A helical membrane pass occupies residues 108 to 128 (AFCMFYAVLGIPLTLVMFQSL). The Cytoplasmic portion of the chain corresponds to 129-158 (GERMNTFVKYLLKRIKKCCGMHSTDVSMEN). Residues 159-179 (MVTVGFFSCMGTLCIGAAAFS) traverse the membrane as a helical segment. Residues 180-194 (HYEEWSFFQAYYYCF) lie on the Extracellular side of the membrane. An intramembrane region (pore-forming) is located at residues 195–207 (ITLTTIGFGDYVA). Topologically, residues 208–218 (LQKNRALQKKP) are extracellular. The chain crosses the membrane as a helical span at residues 219-239 (LYVAFSFMYILVGLTVIGAFL). The Cytoplasmic segment spans residues 240-374 (NLVVLRFLTM…HRLMKRRKSI (135 aa)).

It belongs to the two pore domain potassium channel (TC 1.A.1.8) family. In terms of assembly, homodimer. May form heterodimers with other family members.

It is found in the cell membrane. In terms of biological role, pH-dependent, voltage-insensitive, background potassium channel protein. This Xenopus laevis (African clawed frog) protein is Potassium channel subfamily K member 9 (kcnk9).